Here is a 389-residue protein sequence, read N- to C-terminus: Inactive serine/threonine-protein kinase ZRK12 (389 aa).

Positions 41 to 342 (SADEIRKATN…ETQFDSHQDI (302 aa)) constitute a Protein kinase domain. ATP-binding positions include 47–55 (KATNNFGVS) and lysine 84. A Phosphotyrosine modification is found at tyrosine 129. At threonine 214 the chain carries Phosphothreonine. A Phosphotyrosine modification is found at tyrosine 222.

Belongs to the protein kinase superfamily. Ser/Thr protein kinase family.

In terms of biological role, together with RPP13L4/ZAR1, involved in the regulation of the ambient temperature-sensitive intersection of growth and immune response in the absence of pathogens. The chain is Inactive serine/threonine-protein kinase ZRK12 from Arabidopsis thaliana (Mouse-ear cress).